A 457-amino-acid polypeptide reads, in one-letter code: ATP synthase subunit beta (457 aa).

147–154 lines the ATP pocket; the sequence is GGAGVGKT.

This sequence belongs to the ATPase alpha/beta chains family. As to quaternary structure, F-type ATPases have 2 components, CF(1) - the catalytic core - and CF(0) - the membrane proton channel. CF(1) has five subunits: alpha(3), beta(3), gamma(1), delta(1), epsilon(1). CF(0) has three main subunits: a(1), b(2) and c(9-12). The alpha and beta chains form an alternating ring which encloses part of the gamma chain. CF(1) is attached to CF(0) by a central stalk formed by the gamma and epsilon chains, while a peripheral stalk is formed by the delta and b chains.

The protein localises to the cell inner membrane. The catalysed reaction is ATP + H2O + 4 H(+)(in) = ADP + phosphate + 5 H(+)(out). In terms of biological role, produces ATP from ADP in the presence of a proton gradient across the membrane. The catalytic sites are hosted primarily by the beta subunits. This Pasteurella multocida (strain Pm70) protein is ATP synthase subunit beta.